The following is a 299-amino-acid chain: uncharacterized protein (299 aa).

The next 8 helical transmembrane spans lie at 13-33 (ILFLFSHSFSSFLLPFQLHFM), 36-56 (AFVIGLIAALLAGIVGSFLML), 79-99 (SFGIPLIFGALLASIISVIII), 112-132 (TAIGIVFASFFGLGILLISVI), 151-171 (ITSEDLQNTSIILAIILLFFI), 201-221 (FLILVALTIIVSMKAIGVILV), 241-261 (YVILTSSIIGVSCSFSGMLLS), and 267-287 (PPGPTIVLITSLIFFILFLII).

Belongs to the ABC-3 integral membrane protein family.

The protein localises to the plastid. It is found in the cyanelle membrane. This is an uncharacterized protein from Cyanophora paradoxa.